Reading from the N-terminus, the 219-residue chain is Large ribosomal subunit protein uL16 (219 aa).

Belongs to the universal ribosomal protein uL16 family. As to quaternary structure, component of the small ribosomal subunit. Mature ribosomes consist of a small (40S) and a large (60S) subunit. The 40S subunit contains about 33 different proteins and 1 molecule of RNA (18S). The 60S subunit contains about 49 different proteins and 3 molecules of RNA (25S, 5.8S and 5S).

The sequence is that of Large ribosomal subunit protein uL16 (RPL10) from Solanum melongena (Eggplant).